The following is a 656-amino-acid chain: Broad substrate specificity ATP-binding cassette transporter ABCG2 (656 aa).

The segment at 1–25 is disordered; it reads MSSNSYQVSIPMSKRNTNGLPGSSS. Residues 1–394 lie on the Cytoplasmic side of the membrane; it reads MSSNSYQVSI…SFKNLLGNPQ (394 aa). The ABC transporter domain maps to 37–286; it reads LSFHDICYRV…FASIGYNCEP (250 aa). Residues 80–87, 184–190, Glu-211, and His-243 each bind ATP; these read GPTGGGKS and RGVSGGE. Residues 390-652 enclose the ABC transmembrane type-2 domain; sequence LGNPQASVAQ…TIAYLKLLLL (263 aa). The chain crosses the membrane as a helical span at residues 395 to 415; that stretch reads ASVAQIIVTIILGLVIGAIFY. Over 416–429 the chain is Extracellular; sequence DLKNDPSGIQNRAG. The chain crosses the membrane as a helical span at residues 430–450; that stretch reads VLFFLTTNQCFSSVSAVELLV. Over 451–478 the chain is Cytoplasmic; it reads VEKKLFIHEYISGYYRVSSYFFGKLLSD. Residues 479–498 traverse the membrane as a helical segment; that stretch reads LLPMRMLPSIIFTCITYFLL. At 499 to 507 the chain is on the extracellular side; it reads GLKPAVGSF. Residues 508-530 traverse the membrane as a helical segment; sequence FIMMFTLMMVAYSASSMALAIAA. The Cytoplasmic portion of the chain corresponds to 531-536; it reads GQSVVS. A helical membrane pass occupies residues 537-557; it reads VATLLMTISFVFMMIFSGLLV. Residues 558–631 lie on the Extracellular side of the membrane; the sequence is NLKTVVPWLS…LSAWGLWQNH (74 aa). Cys-593 and Cys-609 are disulfide-bonded. N-linked (GlcNAc...) asparagine glycans are attached at residues Asn-597 and Asn-601. A helical transmembrane segment spans residues 632-652; it reads VALACMMVIFLTIAYLKLLLL. The Cytoplasmic segment spans residues 653-656; the sequence is KKYS.

Belongs to the ABC transporter superfamily. ABCG family. Eye pigment precursor importer (TC 3.A.1.204) subfamily. In terms of assembly, homodimer; disulfide-linked. The minimal functional unit is a homodimer, but the major oligomeric form in plasma membrane is a homotetramer with possibility of higher order oligomerization up to homododecamers. In terms of processing, N-glycosylated. Glycosylation-deficient ABCG2 is normally expressed and functional. Post-translationally, phosphorylated. Phosphorylation may regulate the localization to the plasma membrane, the homooligomerization and therefore, the activity of the transporter. As to expression, high expression in brain, kidney and lung. Also expressed in livere, colon, small intestine, heart, skeletal muscle, spleen, stomach and pancreas.

It localises to the cell membrane. The protein resides in the apical cell membrane. The protein localises to the mitochondrion membrane. The enzyme catalyses ATP + H2O + xenobioticSide 1 = ADP + phosphate + xenobioticSide 2.. The catalysed reaction is urate(in) + ATP + H2O = urate(out) + ADP + phosphate + H(+). It catalyses the reaction indoxyl sulfate(in) + ATP + H2O = indoxyl sulfate(out) + ADP + phosphate + H(+). It carries out the reaction sphing-4-enine 1-phosphate(in) + ATP + H2O = sphing-4-enine 1-phosphate(out) + ADP + phosphate + H(+). The enzyme catalyses estrone 3-sulfate(in) + ATP + H2O = estrone 3-sulfate(out) + ADP + phosphate + H(+). The catalysed reaction is dehydroepiandrosterone 3-sulfate(in) + ATP + H2O = dehydroepiandrosterone 3-sulfate(out) + ADP + phosphate + H(+). It catalyses the reaction 4-methylumbelliferone sulfate(in) + ATP + H2O = 4-methylumbelliferone sulfate(out) + ADP + phosphate + H(+). It carries out the reaction 5,7-dimethyl-2-methylamino-4-(3-pyridylmethyl)-1,3-benzothiazol-6-yl beta-D-glucuronate(in) + ATP + H2O = 5,7-dimethyl-2-methylamino-4-(3-pyridylmethyl)-1,3-benzothiazol-6-yl beta-D-glucuronate(out) + ADP + phosphate + H(+). The enzyme catalyses 4-methylumbelliferone beta-D-glucuronate(in) + ATP + H2O = 4-methylumbelliferone beta-D-glucuronate(out) + ADP + phosphate + H(+). The catalysed reaction is 5,7-dimethyl-2-methylamino-4-(3-pyridylmethyl)-1,3-benzothiazol-6-yl sulfate(in) + ATP + H2O = 5,7-dimethyl-2-methylamino-4-(3-pyridylmethyl)-1,3-benzothiazol-6-yl sulfate(out) + ADP + phosphate + H(+). It catalyses the reaction 17beta-estradiol 17-O-(beta-D-glucuronate)(in) + ATP + H2O = 17beta-estradiol 17-O-(beta-D-glucuronate)(out) + ADP + phosphate + H(+). It carries out the reaction methotrexate(in) + ATP + H2O = methotrexate(out) + ADP + phosphate + H(+). The enzyme catalyses riboflavin(in) + ATP + H2O = riboflavin(out) + ADP + phosphate + H(+). The catalysed reaction is pheophorbide a(in) + ATP + H2O = pheophorbide a(out) + ADP + phosphate + H(+). It catalyses the reaction itaconate(in) + ATP + H2O = itaconate(out) + ADP + phosphate + H(+). Functionally, broad substrate specificity ATP-dependent transporter of the ATP-binding cassette (ABC) family that actively extrudes a wide variety of physiological compounds, dietary toxins and xenobiotics from cells. Involved in porphyrin homeostasis, mediating the export of protoporphyrin IX (PPIX) from both mitochondria to cytosol and cytosol to extracellular space, it also functions in the cellular export of heme. Also mediates the efflux of sphingosine-1-P from cells. Acts as a urate exporter functioning in both renal and extrarenal urate excretion. In kidney, it also functions as a physiological exporter of the uremic toxin indoxyl sulfate. Also involved in the excretion of steroids like estrone 3-sulfate/E1S, 3beta-sulfooxy-androst-5-en-17-one/DHEAS, and other sulfate conjugates. Mediates the secretion of the riboflavin and biotin vitamins into milk. Extrudes pheophorbide a, a phototoxic porphyrin catabolite of chlorophyll, reducing its bioavailability. Plays an important role in the exclusion of xenobiotics from the brain. It confers to cells a resistance to multiple drugs and other xenobiotics including mitoxantrone, pheophorbide, camptothecin, methotrexate, azidothymidine, and the anthracyclines daunorubicin and doxorubicin, through the control of their efflux. In placenta, it limits the penetration of drugs from the maternal plasma into the fetus. May play a role in early stem cell self-renewal by blocking differentiation. In inflammatory macrophages, exports itaconate from the cytosol to the extracellular compartment and limits the activation of TFEB-dependent lysosome biogenesis involved in antibacterial innate immune response. The sequence is that of Broad substrate specificity ATP-binding cassette transporter ABCG2 (ABCG2) from Sus scrofa (Pig).